Consider the following 312-residue polypeptide: Malate dehydrogenase (312 aa).

Residues 7–13 and Asp-34 contribute to the NAD(+) site; that span reads GAAGGIG. Residues Arg-81 and Arg-87 each coordinate substrate. Residues Asn-94 and 117–119 contribute to the NAD(+) site; that span reads ITN. Positions 119 and 153 each coordinate substrate. Catalysis depends on His-177, which acts as the Proton acceptor. Position 227 (Met-227) interacts with NAD(+).

This sequence belongs to the LDH/MDH superfamily. MDH type 1 family. As to quaternary structure, homodimer.

It catalyses the reaction (S)-malate + NAD(+) = oxaloacetate + NADH + H(+). Catalyzes the reversible oxidation of malate to oxaloacetate. The chain is Malate dehydrogenase from Salmonella newport (strain SL254).